The chain runs to 149 residues: Cell division protein SepF (149 aa).

Positions 12–57 (SNEEDDYYEEDGYEQSQQQEQQTTQQTSSQPRFVRQTTQSQTPAGL) are disordered. Over residues 13–24 (NEEDDYYEEDGY) the composition is skewed to acidic residues. Positions 25-41 (EQSQQQEQQTTQQTSSQ) are enriched in low complexity. Polar residues predominate over residues 46–57 (RQTTQSQTPAGL).

The protein belongs to the SepF family. As to quaternary structure, homodimer. Interacts with FtsZ.

The protein resides in the cytoplasm. Its function is as follows. Cell division protein that is part of the divisome complex and is recruited early to the Z-ring. Probably stimulates Z-ring formation, perhaps through the cross-linking of FtsZ protofilaments. Its function overlaps with FtsA. The sequence is that of Cell division protein SepF from Leuconostoc mesenteroides subsp. mesenteroides (strain ATCC 8293 / DSM 20343 / BCRC 11652 / CCM 1803 / JCM 6124 / NCDO 523 / NBRC 100496 / NCIMB 8023 / NCTC 12954 / NRRL B-1118 / 37Y).